The sequence spans 824 residues: FT-interacting protein 1 (824 aa).

C2 domains follow at residues 48-170 (WLGL…PQWY), 217-341 (VRGE…SRWF), and 385-522 (YISD…THAY). 3 helical membrane passes run 625-645 (AVSL…VCHW), 657-677 (LLLI…LYMF), and 764-784 (ATCL…VTPF).

This sequence belongs to the MCTP family. As to quaternary structure, interacts with RFT1 and PI4KG4. As to expression, specifically expressed in the phloem including companion cells.

It is found in the endoplasmic reticulum membrane. In terms of biological role, involved in the export of the long day-specific flower-promoting signal (florigen) RFT1 from the phloem companion cells to sieve elements. Promotes flowering under long days through the transport of RFT1 from the leaves to the shoot apical meristem (SAM). The chain is FT-interacting protein 1 from Oryza sativa subsp. japonica (Rice).